Consider the following 218-residue polypeptide: Ribosomal RNA small subunit methyltransferase G (218 aa).

Residues Gly-82, Leu-87, 133 to 134 (VE), and Arg-147 contribute to the S-adenosyl-L-methionine site.

Belongs to the methyltransferase superfamily. RNA methyltransferase RsmG family.

The protein resides in the cytoplasm. The enzyme catalyses guanosine(527) in 16S rRNA + S-adenosyl-L-methionine = N(7)-methylguanosine(527) in 16S rRNA + S-adenosyl-L-homocysteine. In terms of biological role, specifically methylates the N7 position of guanine in position 527 of 16S rRNA. This is Ribosomal RNA small subunit methyltransferase G from Leptothrix cholodnii (strain ATCC 51168 / LMG 8142 / SP-6) (Leptothrix discophora (strain SP-6)).